The primary structure comprises 167 residues: uncharacterized protein (167 aa).

The chain crosses the membrane as a helical span at residues 5 to 27; the sequence is LILLTFVSFVFSKTFYYDVYVFF.

It is found in the membrane. This is an uncharacterized protein from Aquifex aeolicus (strain VF5).